The primary structure comprises 426 residues: Histidine--tRNA ligase (426 aa).

This sequence belongs to the class-II aminoacyl-tRNA synthetase family. As to quaternary structure, homodimer.

The protein resides in the cytoplasm. The catalysed reaction is tRNA(His) + L-histidine + ATP = L-histidyl-tRNA(His) + AMP + diphosphate + H(+). The polypeptide is Histidine--tRNA ligase (Legionella pneumophila subsp. pneumophila (strain Philadelphia 1 / ATCC 33152 / DSM 7513)).